A 211-amino-acid polypeptide reads, in one-letter code: Shikimate kinase (211 aa).

The segment covering 1-13 (MNASANLCAASAN) has biased composition (low complexity). Positions 1–24 (MNASANLCAASANDPQPGDQEAAH) are disordered. 50 to 55 (GAGKTT) contacts ATP. T54 serves as a coordination point for Mg(2+). Substrate-binding residues include D72, R96, and G118. R156 is an ATP binding site. R175 provides a ligand contact to substrate.

It belongs to the shikimate kinase family. As to quaternary structure, monomer. Requires Mg(2+) as cofactor.

Its subcellular location is the cytoplasm. The catalysed reaction is shikimate + ATP = 3-phosphoshikimate + ADP + H(+). Its pathway is metabolic intermediate biosynthesis; chorismate biosynthesis; chorismate from D-erythrose 4-phosphate and phosphoenolpyruvate: step 5/7. Functionally, catalyzes the specific phosphorylation of the 3-hydroxyl group of shikimic acid using ATP as a cosubstrate. This is Shikimate kinase from Bordetella parapertussis (strain 12822 / ATCC BAA-587 / NCTC 13253).